Consider the following 356-residue polypeptide: 3-isopropylmalate dehydrogenase (356 aa).

Substrate is bound by residues Arg-91, Arg-101, Arg-129, and Asp-223. Mg(2+) is bound by residues Asp-223, Asp-247, and Asp-251. 281 to 293 is a binding site for NAD(+); sequence GSAPDIAGKGIAN.

It belongs to the isocitrate and isopropylmalate dehydrogenases family. LeuB type 1 subfamily. As to quaternary structure, homodimer. Mg(2+) is required as a cofactor. Requires Mn(2+) as cofactor.

The protein localises to the cytoplasm. The catalysed reaction is (2R,3S)-3-isopropylmalate + NAD(+) = 4-methyl-2-oxopentanoate + CO2 + NADH. Its pathway is amino-acid biosynthesis; L-leucine biosynthesis; L-leucine from 3-methyl-2-oxobutanoate: step 3/4. Its function is as follows. Catalyzes the oxidation of 3-carboxy-2-hydroxy-4-methylpentanoate (3-isopropylmalate) to 3-carboxy-4-methyl-2-oxopentanoate. The product decarboxylates to 4-methyl-2 oxopentanoate. This chain is 3-isopropylmalate dehydrogenase, found in Ralstonia nicotianae (strain ATCC BAA-1114 / GMI1000) (Ralstonia solanacearum).